A 287-amino-acid polypeptide reads, in one-letter code: ATP synthase gamma chain (287 aa).

Belongs to the ATPase gamma chain family. In terms of assembly, F-type ATPases have 2 components, CF(1) - the catalytic core - and CF(0) - the membrane proton channel. CF(1) has five subunits: alpha(3), beta(3), gamma(1), delta(1), epsilon(1). CF(0) has three main subunits: a, b and c.

It localises to the cell inner membrane. Functionally, produces ATP from ADP in the presence of a proton gradient across the membrane. The gamma chain is believed to be important in regulating ATPase activity and the flow of protons through the CF(0) complex. The protein is ATP synthase gamma chain of Stenotrophomonas maltophilia (strain K279a).